We begin with the raw amino-acid sequence, 456 residues long: Adenylosuccinate lyase (456 aa).

N(6)-(1,2-dicarboxyethyl)-AMP-binding positions include 15-16 (RY), 90-92 (NHD), and 122-123 (TS). Histidine 171 functions as the Proton donor/acceptor in the catalytic mechanism. Residue glutamine 247 coordinates N(6)-(1,2-dicarboxyethyl)-AMP. Serine 295 functions as the Proton donor/acceptor in the catalytic mechanism. Residues serine 296, 301-303 (KVN), asparagine 309, arginine 335, and 340-344 (STVLR) contribute to the N(6)-(1,2-dicarboxyethyl)-AMP site.

Belongs to the lyase 1 family. Adenylosuccinate lyase subfamily. Homotetramer. Residues from neighboring subunits contribute catalytic and substrate-binding residues to each active site.

The enzyme catalyses N(6)-(1,2-dicarboxyethyl)-AMP = fumarate + AMP. It catalyses the reaction (2S)-2-[5-amino-1-(5-phospho-beta-D-ribosyl)imidazole-4-carboxamido]succinate = 5-amino-1-(5-phospho-beta-D-ribosyl)imidazole-4-carboxamide + fumarate. Its pathway is purine metabolism; AMP biosynthesis via de novo pathway; AMP from IMP: step 2/2. It participates in purine metabolism; IMP biosynthesis via de novo pathway; 5-amino-1-(5-phospho-D-ribosyl)imidazole-4-carboxamide from 5-amino-1-(5-phospho-D-ribosyl)imidazole-4-carboxylate: step 2/2. In terms of biological role, catalyzes two reactions in de novo purine nucleotide biosynthesis. Catalyzes the breakdown of 5-aminoimidazole- (N-succinylocarboxamide) ribotide (SAICAR or 2-[5-amino-1-(5-phospho-beta-D-ribosyl)imidazole-4-carboxamido]succinate) to 5-aminoimidazole-4-carboxamide ribotide (AICAR or 5-amino-1-(5-phospho-beta-D-ribosyl)imidazole-4-carboxamide) and fumarate, and of adenylosuccinate (ADS or N(6)-(1,2-dicarboxyethyl)-AMP) to adenosine monophosphate (AMP) and fumarate. This Haemophilus influenzae (strain ATCC 51907 / DSM 11121 / KW20 / Rd) protein is Adenylosuccinate lyase (purB).